We begin with the raw amino-acid sequence, 668 residues long: Biotin biosynthesis bifunctional protein BioWF (668 aa).

R293 provides a ligand contact to substrate. A pyridoxal 5'-phosphate-binding site is contributed by 380 to 381 (GY). H405 is a binding site for substrate. Pyridoxal 5'-phosphate contacts are provided by residues S451, 476-479 (DDAH), and 507-510 (TASK). Position 510 is an N6-(pyridoxal phosphate)lysine (K510).

This sequence in the N-terminal section; belongs to the BioW family. The protein in the C-terminal section; belongs to the class-II pyridoxal-phosphate-dependent aminotransferase family. BioF subfamily. As to quaternary structure, homodimer. Mg(2+) serves as cofactor. Requires pyridoxal 5'-phosphate as cofactor.

The catalysed reaction is heptanedioate + ATP + CoA = 6-carboxyhexanoyl-CoA + AMP + diphosphate. It catalyses the reaction 6-carboxyhexanoyl-[ACP] + L-alanine + H(+) = (8S)-8-amino-7-oxononanoate + holo-[ACP] + CO2. It functions in the pathway metabolic intermediate metabolism; pimeloyl-CoA biosynthesis; pimeloyl-CoA from pimelate: step 1/1. Its pathway is cofactor biosynthesis; biotin biosynthesis. Functionally, catalyzes both the decarboxylative condensation of pimeloyl-[acyl-carrier protein] and L-alanine to produce 8-amino-7-oxononanoate (AON), [acyl-carrier protein], and carbon dioxide, and the transformation of pimelate into pimeloyl-CoA with concomitant hydrolysis of ATP to AMP. This is Biotin biosynthesis bifunctional protein BioWF from Cutibacterium acnes (strain SK137) (Propionibacterium acnes).